Here is a 262-residue protein sequence, read N- to C-terminus: LysM domain-containing protein ARB_03438 (262 aa).

An N-terminal signal peptide occupies residues 1–22; it reads MVSIPLILGAIILLGTRKAATA. The 45-residue stretch at 31 to 75 folds into the LysM 1 domain; sequence FAVTAATDDTCQSLGAQWGIGMAQFLKWNPGVNCNALVAGKTYCL. Positions 85 to 112 are disordered; it reads TASLTPSPQVPTTSRATQTMTSKASTGT. Over residues 86–112 the composition is skewed to polar residues; that stretch reads ASLTPSPQVPTTSRATQTMTSKASTGT. Residues 132–179 enclose the LysM 2 domain; sequence FYHPVSPGDTCQSIVDRYKAFTLDQFYTWNPSVGKNCESLWLGYYVCT. The tract at residues 184–240 is disordered; sequence GPNSPSQQPPSQQPPSQQSPSQQSPSQQSPSQQPPSQQPPSQQPPSQQSNTSQQTQP. Positions 197–214 are enriched in low complexity; sequence PPSQQSPSQQSPSQQSPS. Positions 215-226 are enriched in pro residues; it reads QQPPSQQPPSQQ. A compositionally biased stretch (low complexity) spans 227–240; the sequence is PPSQQSNTSQQTQP. An N-linked (GlcNAc...) asparagine glycan is attached at Asn-233.

Its subcellular location is the secreted. Functionally, might have a role in sequestration of chitin oligosaccharides (breakdown products of fungal cell walls that are released during invasion and act as triggers of host immunity) to dampen host defense. The protein is LysM domain-containing protein ARB_03438 of Arthroderma benhamiae (strain ATCC MYA-4681 / CBS 112371) (Trichophyton mentagrophytes).